The chain runs to 162 residues: Nucleotide-binding protein SCO4614 (162 aa).

This sequence belongs to the YajQ family.

The protein resides in the cytoplasm. The protein localises to the nucleoid. Its function is as follows. Nucleotide-binding protein. In Streptomyces coelicolor (strain ATCC BAA-471 / A3(2) / M145), this protein is Nucleotide-binding protein SCO4614.